We begin with the raw amino-acid sequence, 72 residues long: Large ribosomal subunit protein bL31 (72 aa).

The Zn(2+) site is built by Cys16, Cys18, Cys38, and Cys41.

Belongs to the bacterial ribosomal protein bL31 family. Type A subfamily. In terms of assembly, part of the 50S ribosomal subunit. The cofactor is Zn(2+).

Its function is as follows. Binds the 23S rRNA. This is Large ribosomal subunit protein bL31 from Vibrio atlanticus (strain LGP32) (Vibrio splendidus (strain Mel32)).